Reading from the N-terminus, the 200-residue chain is Dephospho-CoA kinase (200 aa).

Positions 4–200 (TIGLTGSVAT…TFIKRFVKNK (197 aa)) constitute a DPCK domain. Position 12–17 (12–17 (ATGKST)) interacts with ATP.

This sequence belongs to the CoaE family.

It localises to the cytoplasm. It carries out the reaction 3'-dephospho-CoA + ATP = ADP + CoA + H(+). The protein operates within cofactor biosynthesis; coenzyme A biosynthesis; CoA from (R)-pantothenate: step 5/5. Functionally, catalyzes the phosphorylation of the 3'-hydroxyl group of dephosphocoenzyme A to form coenzyme A. This is Dephospho-CoA kinase from Listeria monocytogenes serotype 4b (strain F2365).